Here is a 404-residue protein sequence, read N- to C-terminus: Cysteine desulfurase IscS (404 aa).

Pyridoxal 5'-phosphate is bound by residues 75 to 76 (AT), N155, Q183, and 203 to 205 (SAH). K206 bears the N6-(pyridoxal phosphate)lysine mark. T243 provides a ligand contact to pyridoxal 5'-phosphate. C328 (cysteine persulfide intermediate) is an active-site residue. C328 is a [2Fe-2S] cluster binding site.

This sequence belongs to the class-V pyridoxal-phosphate-dependent aminotransferase family. NifS/IscS subfamily. Homodimer. Forms a heterotetramer with IscU, interacts with other sulfur acceptors. The cofactor is pyridoxal 5'-phosphate.

It localises to the cytoplasm. It carries out the reaction (sulfur carrier)-H + L-cysteine = (sulfur carrier)-SH + L-alanine. The protein operates within cofactor biosynthesis; iron-sulfur cluster biosynthesis. In terms of biological role, master enzyme that delivers sulfur to a number of partners involved in Fe-S cluster assembly, tRNA modification or cofactor biosynthesis. Catalyzes the removal of elemental sulfur atoms from cysteine to produce alanine. Functions as a sulfur delivery protein for Fe-S cluster synthesis onto IscU, an Fe-S scaffold assembly protein, as well as other S acceptor proteins. In Vesicomyosocius okutanii subsp. Calyptogena okutanii (strain HA), this protein is Cysteine desulfurase IscS.